Reading from the N-terminus, the 98-residue chain is UPF0213 protein BPUM_0019 (98 aa).

A GIY-YIG domain is found at 4–79 (HNHYFYVLKC…KTWTRKKKDL (76 aa)).

It belongs to the UPF0213 family.

The polypeptide is UPF0213 protein BPUM_0019 (Bacillus pumilus (strain SAFR-032)).